A 476-amino-acid polypeptide reads, in one-letter code: Glutamate mutase epsilon subunit (476 aa).

An L-glutamate-binding site is contributed by R62. Residue G64 coordinates adenosylcob(III)alamin. R96 is an L-glutamate binding site. N119 contacts adenosylcob(III)alamin. Residues 145–146, E167, and Y173 each bind L-glutamate; that span reads RH. P176 is a binding site for adenosylcob(III)alamin. Y177 is an L-glutamate binding site. Positions 289, 318, and 322 each coordinate adenosylcob(III)alamin.

Belongs to the methylaspartate mutase GlmE subunit family. In terms of assembly, heterotetramer composed of 2 epsilon subunits (GlmE) and 2 sigma subunits (GlmS). GlmE exists as a homodimer and GlmS as a monomer. It depends on adenosylcob(III)alamin as a cofactor.

The enzyme catalyses (2S,3S)-3-methyl-L-aspartate = L-glutamate. It participates in amino-acid degradation; L-glutamate degradation via mesaconate pathway; acetate and pyruvate from L-glutamate: step 1/4. In terms of biological role, catalyzes the carbon skeleton rearrangement of L-glutamate to L-threo-3-methylaspartate ((2S,3S)-3-methylaspartate). This Halobacterium salinarum (strain ATCC 700922 / JCM 11081 / NRC-1) (Halobacterium halobium) protein is Glutamate mutase epsilon subunit.